A 196-amino-acid chain; its full sequence is 3-isopropylmalate dehydratase small subunit (196 aa).

This sequence belongs to the LeuD family. LeuD type 1 subfamily. In terms of assembly, heterodimer of LeuC and LeuD.

It carries out the reaction (2R,3S)-3-isopropylmalate = (2S)-2-isopropylmalate. Its pathway is amino-acid biosynthesis; L-leucine biosynthesis; L-leucine from 3-methyl-2-oxobutanoate: step 2/4. Catalyzes the isomerization between 2-isopropylmalate and 3-isopropylmalate, via the formation of 2-isopropylmaleate. The sequence is that of 3-isopropylmalate dehydratase small subunit from Rhodopirellula baltica (strain DSM 10527 / NCIMB 13988 / SH1).